Reading from the N-terminus, the 677-residue chain is Elongation factor G 2 (677 aa).

Residues 8-283 form the tr-type G domain; that stretch reads SRIRNIGIIA…AVVNFLPSPE (276 aa). GTP is bound by residues 17-24, 81-85, and 135-138; these read AHIDAGKT, DTPGH, and NKMD.

It belongs to the TRAFAC class translation factor GTPase superfamily. Classic translation factor GTPase family. EF-G/EF-2 subfamily.

The protein localises to the cytoplasm. Its function is as follows. Catalyzes the GTP-dependent ribosomal translocation step during translation elongation. During this step, the ribosome changes from the pre-translocational (PRE) to the post-translocational (POST) state as the newly formed A-site-bound peptidyl-tRNA and P-site-bound deacylated tRNA move to the P and E sites, respectively. Catalyzes the coordinated movement of the two tRNA molecules, the mRNA and conformational changes in the ribosome. The polypeptide is Elongation factor G 2 (Syntrophus aciditrophicus (strain SB)).